A 452-amino-acid polypeptide reads, in one-letter code: Phosphoglucosamine mutase (452 aa).

Ser-108 (phosphoserine intermediate) is an active-site residue. Residues Ser-108, Asp-247, Asp-249, and Asp-251 each contribute to the Mg(2+) site. Ser-108 is modified (phosphoserine).

The protein belongs to the phosphohexose mutase family. Requires Mg(2+) as cofactor. Post-translationally, activated by phosphorylation.

The enzyme catalyses alpha-D-glucosamine 1-phosphate = D-glucosamine 6-phosphate. Catalyzes the conversion of glucosamine-6-phosphate to glucosamine-1-phosphate. This is Phosphoglucosamine mutase from Burkholderia pseudomallei (strain K96243).